Here is a 1683-residue protein sequence, read N- to C-terminus: MSSRRKRAPPVRVDEEKRQQLHWNMHEDRRNEPIIISDDDEQPCPGSDTSSAHYIILSDSLKEEVAHRDKKRCSKVVSFSKPIEKEETVGIFSPLSVKLNIVISPYHFDNSWKAFLGELTLQLLPAQSLIENFSERSITLMSSESSNQFLIYVHSKGEDVEKQKKEPMSICDKGILVESSFSGEMLEDLGWLQKKRRIKLYQKPEGNHIIKVGIYLLEAGLAKLDFLSDANSRMKKFNQLMKKVMEKLHNSIIPDVLEEDEDDPESEPEGQDIDELYHFVKQTHQQETQSIQVDVQHPALIPVLRPYQREAVNWMLQQECFRSSPATESALHFLWREIVTSEGLKLYYNPYTGCIIREYPNSGPQLLGGILADEMGLGKTVEVLALILTHTRQDVKQDALTLPEGKVVNYFIPSHYFGGKLKKTEIQNIEFEPKEKVQCPPTRVMILTAVKEMNGKKGVSILSIYKYVSSIYRYDVQRNRSLLKRMLKCLIFEGLVKQIKGHGFSGTFTLGKNYKEEDICDKTKKQAVGSPRKIQKETRKSGNKDTDSEYLPSDTSDDDDDPYYYYYKSRRNRSKLRKKLVPSTKKGKSQPFINPDSQGHCPATSDSGITDVAMSKSTCISEFNQEHETEDCAESLNHADSDVPPSNTMSPFNTSDYRFECICGELDQIDRKPRVQCLKCHLWQHAKCVNYDEKNLKIKPFYCPHCLVAMEPVSTRATLIISPSSICHQWVDEINRHVRSSSLRVLVYQGVKKDGFLQPHFLAEQDIVIITYDVLRSELNYVDIPHSNSEDGRRLRNQKRYMAIPSPLVAVEWWRICLDEAQMVECPTVKAAEMAQRLSGINRWCISGTPVQRGLEDLFGLVVFLGIEPYCVKHWWVRLLYRPYCKKNPQHLYSFIAKILWRSAKKDVIDQIQIPPQTEEIHWLHFSPVERHFYHRQHEVCCQDVVVKLRKISDWALKLSSLDRRTVTSILYPLLRLRQACCHPQAVRGEFLPLQKSTMTMEELLTSLQKKCGTECEEAHRQLVCALNGLAGIHIIKGEYALAAELYREVLRSSEEHKGKLKTDSLQRLHATHNLMELLIARHPGIPPTLRDGRLEEEAKQLREHYMSKCNTEVAEAQQALYPVQQTIHELQRKIHSNSPWWLNVIHRAIEFTIDEELVQRVRNEITSNYKQQTGKLSMSEKFRDCRGLQFLLTTQMEELNKCQKLVREAVKNLEGPPSRNVIESATVCHLRPARLPLNCCVFCKADELFTEYESKLFSNTVKGQTAIFEEMIEDEEGLVDDRAPTTTRGLWAISETERSMKAILSFAKSHRFDVEFVDEGSTSMDLFEAWKKEYKLLHEYWMALRNRVSAVDELAMATERLRVRDPREPKPNPPVLHIIEPHEVEQNRIKLLNDKAVATSQLQKKLGQLLYLTNLEKSQDKTSGGVNPEPCPICARQLGKQWAVLTCGHCFCNECISIIIEQYSVGSHRSSIKCAICRQTTSHKEISYVFTSEKANQEEDIPVKGSHSTKVEAVVRTLMKIQLRDPGAKALVFSTWQDVLDIISKALTDNNMEFAQISRVKTFQENLSAFKRDPQINILLLPLHTGSNGLTIIEATHVLLVEPILNPAHELQAIGRVHRIGQTKPTIVHRFLIKATIEERMQAMLKTAERSHTNSSAKHSEASVLTVADLADLFTKETEELE.

The segment at Met1–Pro43 is disordered. Positions Arg12–Glu32 are enriched in basic and acidic residues. Ser266 carries the phosphoserine modification. Positions Tyr307–Thr389 constitute a Helicase ATP-binding; first part domain. Asp373–Thr380 is an ATP binding site. In terms of domain architecture, H15 spans Gln438–Lys512. The tract at residues Lys525–Ser607 is disordered. Basic and acidic residues predominate over residues Ile534–Asp547. Basic residues predominate over residues Lys568–Lys588. A Phosphoserine modification is found at Ser635. The PHD-type zinc finger occupies Arg658 to Ala709. Positions Met710–Glu868 constitute a Helicase ATP-binding; second part domain. Residues Asp819–Gln822 carry the DEAQ box motif. The RING-type zinc-finger motif lies at Cys1432–Arg1479. The Helicase C-terminal domain occupies Ala1514–Ala1672.

The protein belongs to the SNF2/RAD54 helicase family. In terms of assembly, homodimer. Interacts with HLTF, PCNA, UBE2N and RAD18. Broadly expressed.

The catalysed reaction is S-ubiquitinyl-[E2 ubiquitin-conjugating enzyme]-L-cysteine + [acceptor protein]-L-lysine = [E2 ubiquitin-conjugating enzyme]-L-cysteine + N(6)-ubiquitinyl-[acceptor protein]-L-lysine.. Its pathway is protein modification; protein ubiquitination. E3 ubiquitin-protein ligase involved in DNA repair. Upon genotoxic stress, accepts ubiquitin from the UBE2N-UBE2V2 E2 complex and transfers it to 'Lys-164' of PCNA which had been monoubiquitinated by UBE2A/B-RAD18, promoting the formation of non-canonical poly-ubiquitin chains linked through 'Lys-63'. This Homo sapiens (Human) protein is E3 ubiquitin-protein ligase SHPRH (SHPRH).